The primary structure comprises 317 residues: tRNA pseudouridine synthase B (317 aa).

Asp47 acts as the Nucleophile in catalysis.

This sequence belongs to the pseudouridine synthase TruB family. Type 1 subfamily.

The enzyme catalyses uridine(55) in tRNA = pseudouridine(55) in tRNA. Its function is as follows. Responsible for synthesis of pseudouridine from uracil-55 in the psi GC loop of transfer RNAs. The protein is tRNA pseudouridine synthase B of Shewanella frigidimarina (strain NCIMB 400).